We begin with the raw amino-acid sequence, 744 residues long: Zinc finger protein 483 (744 aa).

One can recognise an SCAN box domain in the interval 52–134; sequence RQRFRWFCYS…TLIEDLTQML (83 aa). Residues 137-156 are disordered; the sequence is KDPVSQDSTVSQEENSKEDK. The region spanning 170–241 is the KRAB domain; that stretch reads ITLKDVAVNF…EEVSKSSRLD (72 aa). Disordered regions lie at residues 263-308 and 350-385; these read ESQQ…SPFG and KEKTAGEKSRKSNDGGKVLSHSSALTEHQKRQKIHL. Polar residues predominate over residues 277 to 293; the sequence is NQGNSKGRVAQNKTLGS. Basic and acidic residues-rich tracts occupy residues 298 to 308 and 350 to 363; these read KKFDPDKSPFG and KEKTAGEKSRKSND. 11 consecutive C2H2-type zinc fingers follow at residues 439–461, 467–489, 495–517, 523–545, 551–573, 579–601, 607–629, 635–657, 663–685, 691–713, and 719–741; these read HKCSKCGKAFGYSASLTKHRRIH, YMCNECGKAFSDSSSLTPHHRTH, FKCDDCGKGFTLSAHLIKHQRIH, YKCKDCGRPFSDSSSLIQHQRIH, YTCSNCGKSFSHSSSLSKHQRIH, YKCGECGKAFRQNSCLTRHQRIH, YLCNDCGMTFSHFTSVIYHQRLH, YKCNQCEKAFPTHSLLSRHQRIH, YKCKECGKSFSQSSSLNEHHRIH, YECNYCGATFSRSSILVEHLKIH, and YECNECEKTFKSNSGLIRHRGFH.

The protein belongs to the krueppel C2H2-type zinc-finger protein family.

The protein localises to the nucleus. Its function is as follows. May be involved in transcriptional regulation. This is Zinc finger protein 483 (ZNF483) from Homo sapiens (Human).